Here is a 362-residue protein sequence, read N- to C-terminus: Exopolygalacturonase (362 aa).

4 PbH1 repeats span residues 138–164 (CKNLTFERFKISAAETSINTDGIHIGR), 165–186 (SDGVNIINTEIKTGDDCISLGD), 188–208 (SKNINITNITCGPGHGISVGS), and 218–239 (VVGIYVKNCTITGSQNGVRIKT). N-linked (GlcNAc...) asparagine glycosylation is present at Asn140. Asp179 functions as the Proton donor in the catalytic mechanism. N-linked (GlcNAc...) asparagine glycans are attached at residues Asn192 and Asn195. His202 is an active-site residue. Asn225 carries an N-linked (GlcNAc...) asparagine glycan.

This sequence belongs to the glycosyl hydrolase 28 family. In terms of tissue distribution, pollen tubes growing through the style during pollination.

The protein localises to the secreted. It localises to the cell wall. The catalysed reaction is [(1-&gt;4)-alpha-D-galacturonosyl](n) + H2O = alpha-D-galacturonate + [(1-&gt;4)-alpha-D-galacturonosyl](n-1). Functionally, may function in depolymerizing pectin during pollen development, germination, and tube growth. Acts as an exo-polygalacturonase. This chain is Exopolygalacturonase, found in Oenothera organensis (Evening primrose).